A 489-amino-acid polypeptide reads, in one-letter code: Mitochondrial-processing peptidase subunit beta (489 aa).

A mitochondrion-targeting transit peptide spans Met-1 to Thr-45. His-101 contributes to the Zn(2+) binding site. Residue Glu-104 is the Proton acceptor of the active site. The Zn(2+) site is built by His-105 and Glu-181.

It belongs to the peptidase M16 family. Heterodimer of PMPCA (alpha) and PMPCB (beta) subunits, forming the mitochondrial processing protease (MPP) in which PMPCA is involved in substrate recognition and binding and PMPCB is the catalytic subunit. Zn(2+) is required as a cofactor.

Its subcellular location is the mitochondrion matrix. The catalysed reaction is Release of N-terminal transit peptides from precursor proteins imported into the mitochondrion, typically with Arg in position P2.. Binding to PMPCA is required for catalytic activity. Catalytic subunit of the essential mitochondrial processing protease (MPP), which cleaves the mitochondrial sequence off newly imported precursors proteins. Preferentially, cleaves after an arginine at position P2. Required for PINK1 turnover by coupling PINK1 mitochondrial import and cleavage, which results in subsequent PINK1 proteolysis. The chain is Mitochondrial-processing peptidase subunit beta (Pmpcb) from Mus musculus (Mouse).